A 363-amino-acid chain; its full sequence is NAD(P)H-quinone oxidoreductase subunit 1, chloroplastic (363 aa).

The next 8 membrane-spanning stretches (helical) occupy residues 26-46 (FVWI…GVLV), 96-116 (WLFA…FLVI), 127-147 (ISIG…GLLV), 175-195 (LALC…IEIV), 203-223 (ILGW…ISAL), 253-273 (FGLF…FVTI), 303-323 (GLIA…ASIL), and 343-363 (FLLP…LALL).

This sequence belongs to the complex I subunit 1 family. NDH is composed of at least 16 different subunits, 5 of which are encoded in the nucleus.

The protein resides in the plastid. It is found in the chloroplast thylakoid membrane. The enzyme catalyses a plastoquinone + NADH + (n+1) H(+)(in) = a plastoquinol + NAD(+) + n H(+)(out). It catalyses the reaction a plastoquinone + NADPH + (n+1) H(+)(in) = a plastoquinol + NADP(+) + n H(+)(out). NDH shuttles electrons from NAD(P)H:plastoquinone, via FMN and iron-sulfur (Fe-S) centers, to quinones in the photosynthetic chain and possibly in a chloroplast respiratory chain. The immediate electron acceptor for the enzyme in this species is believed to be plastoquinone. Couples the redox reaction to proton translocation, and thus conserves the redox energy in a proton gradient. The protein is NAD(P)H-quinone oxidoreductase subunit 1, chloroplastic of Zygnema circumcarinatum (Green alga).